We begin with the raw amino-acid sequence, 88 residues long: DASH complex subunit HSK3 (88 aa).

The segment covering Met1–Ser15 has biased composition (low complexity). Residues Met1–Lys24 are disordered.

The protein belongs to the DASH complex HSK3 family. Component of the DASH complex consisting of ASK1, DAD1, DAD2, DAD3, DAD4, DAM1, DUO1, HSK3, SPC19 and SPC34, with a stoichiometry of one copy of each subunit per complex. Multiple DASH complexes oligomerize to form a ring that encircles spindle microtubules and organizes the rod-like NDC80 complexes of the outer kinetochore. DASH complex oligomerization strengthens microtubule attachments. On cytoplasmic microtubules, DASH complexes appear to form patches instead of rings.

It is found in the nucleus. The protein localises to the cytoplasm. It localises to the cytoskeleton. Its subcellular location is the spindle. The protein resides in the chromosome. It is found in the centromere. The protein localises to the kinetochore. Its function is as follows. Component of the DASH complex that connects microtubules with kinetochores and couples microtubule depolymerisation to chromosome movement; it is involved in retrieving kinetochores to the spindle poles before their re-orientation on the spindle in early mitosis and allows microtubule depolymerization to pull chromosomes apart and resist detachment during anaphase. Kinetochores, consisting of a centromere-associated inner segment and a microtubule-contacting outer segment, play a crucial role in chromosome segregation by mediating the physical connection between centromeric DNA and microtubules. Kinetochores also serve as an input point for the spindle assembly checkpoint, which delays anaphase until all chromosomes have bioriented on the mitotic spindle. This is DASH complex subunit HSK3 from Chaetomium thermophilum (strain DSM 1495 / CBS 144.50 / IMI 039719) (Thermochaetoides thermophila).